A 450-amino-acid chain; its full sequence is Probable glycine dehydrogenase (decarboxylating) subunit 1 (450 aa).

It belongs to the GcvP family. N-terminal subunit subfamily. In terms of assembly, the glycine cleavage system is composed of four proteins: P, T, L and H. In this organism, the P 'protein' is a heterodimer of two subunits.

It carries out the reaction N(6)-[(R)-lipoyl]-L-lysyl-[glycine-cleavage complex H protein] + glycine + H(+) = N(6)-[(R)-S(8)-aminomethyldihydrolipoyl]-L-lysyl-[glycine-cleavage complex H protein] + CO2. Functionally, the glycine cleavage system catalyzes the degradation of glycine. The P protein binds the alpha-amino group of glycine through its pyridoxal phosphate cofactor; CO(2) is released and the remaining methylamine moiety is then transferred to the lipoamide cofactor of the H protein. The chain is Probable glycine dehydrogenase (decarboxylating) subunit 1 from Staphylococcus haemolyticus (strain JCSC1435).